We begin with the raw amino-acid sequence, 542 residues long: Membrane protein insertase YidC (542 aa).

5 consecutive transmembrane segments (helical) span residues 7–27 (LLVM…QQDF), 338–358 (FALL…IIGV), 417–437 (MGGC…YWTF), 455–475 (LSAQ…MFLL), and 494–514 (FMPV…VLYW).

Belongs to the OXA1/ALB3/YidC family. Type 1 subfamily. In terms of assembly, interacts with the Sec translocase complex via SecD. Specifically interacts with transmembrane segments of nascent integral membrane proteins during membrane integration.

It is found in the cell inner membrane. In terms of biological role, required for the insertion and/or proper folding and/or complex formation of integral membrane proteins into the membrane. Involved in integration of membrane proteins that insert both dependently and independently of the Sec translocase complex, as well as at least some lipoproteins. Aids folding of multispanning membrane proteins. The sequence is that of Membrane protein insertase YidC from Actinobacillus pleuropneumoniae serotype 7 (strain AP76).